The sequence spans 517 residues: Ribose import ATP-binding protein RbsA 2 (517 aa).

2 ABC transporter domains span residues 11–251 and 263–507; these read LEMR…VGRD and YDPG…ALAT. An ATP-binding site is contributed by 43–50; it reads GENGAGKS.

It belongs to the ABC transporter superfamily. Ribose importer (TC 3.A.1.2.1) family. In terms of assembly, the complex is composed of an ATP-binding protein (RbsA), two transmembrane proteins (RbsC) and a solute-binding protein (RbsB).

The protein resides in the cell inner membrane. It catalyses the reaction D-ribose(out) + ATP + H2O = D-ribose(in) + ADP + phosphate + H(+). Its function is as follows. Part of the ABC transporter complex RbsABC involved in ribose import. Responsible for energy coupling to the transport system. The chain is Ribose import ATP-binding protein RbsA 2 from Burkholderia pseudomallei (strain 1710b).